A 507-amino-acid chain; its full sequence is Congo red hypersensitive protein 1 (507 aa).

The signal sequence occupies residues 1-22 (MKVLDLLTVLSASSLLSTFAAA). In terms of domain architecture, GH16 spans 34-260 (ASSTASCNPL…KVIVTDYSTG (227 aa)). C40 and C48 form a disulfide bridge. The N-linked (GlcNAc...) asparagine glycan is linked to N117. E134 acts as the Nucleophile in catalysis. The active-site Proton donor is E138. E138 is a binding site for chitin. 2 N-linked (GlcNAc...) asparagine glycosylation sites follow: N177 and N201. The chitin site is built by W219 and T230. 2 disordered regions span residues 329-368 (SSSA…SSKT) and 381-478 (SSFE…TNSV). 2 stretches are compositionally biased toward low complexity: residues 381–439 (SSFE…PVQD) and 451–477 (TSST…STNS). N482 carries GPI-anchor amidated asparagine lipidation. Residues 483–507 (GADLAQSLPREGKLFSVLVALLALL) constitute a propeptide, removed in mature form.

The protein belongs to the glycosyl hydrolase 16 family. CRH1 subfamily. The GPI-anchor is attached to the protein in the endoplasmic reticulum and serves to target the protein to the cell surface. There, the glucosamine-inositol phospholipid moiety is cleaved off and the GPI-modified mannoprotein is covalently attached via its lipidless GPI glycan remnant to the 1,6-beta-glucan of the outer cell wall layer.

The protein localises to the secreted. The protein resides in the cell wall. It is found in the membrane. It carries out the reaction Random endo-hydrolysis of N-acetyl-beta-D-glucosaminide (1-&gt;4)-beta-linkages in chitin and chitodextrins.. In terms of biological role, dual chitinase/transglycosylase that plays a role in cell wall architecture. Chitinase and transglycosylase activities are coupled. Required for the polysaccharide cross-linking at the septa and the cell wall. More specifically, transfers chitin to both beta(1-3)- and beta(1-6)glucan in the cell wall. The minimal number of intact hexopyranose units required in the molecule of the acceptor oligosaccharide is two and the effectivity of the acceptor increased with the increasing length of its oligosaccharide chain. The sequence is that of Congo red hypersensitive protein 1 from Saccharomyces cerevisiae (strain ATCC 204508 / S288c) (Baker's yeast).